Here is a 309-residue protein sequence, read N- to C-terminus: Homoserine O-succinyltransferase (309 aa).

The Acyl-thioester intermediate role is filled by cysteine 142. Substrate contacts are provided by lysine 163 and serine 192. Histidine 235 functions as the Proton acceptor in the catalytic mechanism. Glutamate 237 is an active-site residue. Arginine 249 contributes to the substrate binding site.

Belongs to the MetA family. In terms of assembly, homodimer.

It localises to the cytoplasm. The enzyme catalyses L-homoserine + succinyl-CoA = O-succinyl-L-homoserine + CoA. It participates in amino-acid biosynthesis; L-methionine biosynthesis via de novo pathway; O-succinyl-L-homoserine from L-homoserine: step 1/1. Transfers a succinyl group from succinyl-CoA to L-homoserine, forming succinyl-L-homoserine. In Shigella sonnei (strain Ss046), this protein is Homoserine O-succinyltransferase.